Consider the following 183-residue polypeptide: MKKKTTLSEEDQALFRQLMAGTRKIKQDTIVHRPQRKKISEVPVKRLIQEQADASHYFSDEFQPLLNTEGPVKYVRPDVSHFEAKKLRRGDYSPELFLDLHGLTQLQAKQELGALIAACRREHVFCACVMHGHGKHILKQQTPLWLAQHPHVMAFHQAPKEYGGDAALLVLIEVDEWLPPELP.

Positions 98 to 173 (LDLHGLTQLQ…GDAALLVLIE (76 aa)) constitute a Smr domain.

It belongs to the SmrB family. In terms of assembly, associates with collided ribosomes, but not with correctly translating polysomes.

Its function is as follows. Acts as a ribosome collision sensor. Detects stalled/collided disomes (pairs of ribosomes where the leading ribosome is stalled and a second ribosome has collided with it) and endonucleolytically cleaves mRNA at the 5' boundary of the stalled ribosome. Stalled/collided disomes form a new interface (primarily via the 30S subunits) that binds SmrB. Cleaved mRNA becomes available for tmRNA ligation, leading to ribosomal subunit dissociation and rescue of stalled ribosomes. This chain is Ribosome rescue factor SmrB, found in Escherichia coli O17:K52:H18 (strain UMN026 / ExPEC).